Here is a 319-residue protein sequence, read N- to C-terminus: MNSSVEKQNSEIPEKENEEFTFQDNSQGFELEFSTNKKTLSKIQKANLSLKTNDAFNISFLKAFSRKNHIYYHVNYKEFSVDICDTHGKNYLPLVTKSEIKKNLDKIKDEKVRSTISDIHFGAIKVLIKARFREGINSPIKMALIDDRITDRQDSILGAAHGNLVYGKFMFTVYPKYTTSILDQRLDRTLAFIHHFERNDLMRKGDKVFSITYLVAYALANSHHSIDYKEKDAIEIDDVFSEIGSVKSPTFTELDPEPNSWAIDIAQGKQPIGFKPKPTVSNNFLRFDKETSPSSSHQKSLEEISDKIDTLVVKLNNIS.

Positions 1–20 (MNSSVEKQNSEIPEKENEEF) are disordered. Residues 289–319 (KETSPSSSHQKSLEEISDKIDTLVVKLNNIS) adopt a coiled-coil conformation.

This sequence belongs to the caulimoviridae movement protein family. Homotrimer, through the coiled-coil domain. Interacts with VAP.

The protein localises to the host cell junction. It is found in the host plasmodesma. In terms of biological role, transports viral genome to neighboring plant cells directly through plasmosdesmata, without any budding. The movement protein allows efficient cell to cell propagation, by bypassing the host cell wall barrier. Acts by forming tubules structures that increase the size exclusion limit (SEL) of plasmodesmata, thereby allowing viral ribonucleocapsids to spread directly to neighboring cells. This chain is Movement protein, found in Dianthus caryophyllus (Carnation).